Here is a 150-residue protein sequence, read N- to C-terminus: Arginine repressor (150 aa).

Belongs to the ArgR family.

The protein localises to the cytoplasm. It functions in the pathway amino-acid biosynthesis; L-arginine biosynthesis [regulation]. Functionally, regulates arginine biosynthesis genes. This chain is Arginine repressor, found in Staphylococcus epidermidis (strain ATCC 35984 / DSM 28319 / BCRC 17069 / CCUG 31568 / BM 3577 / RP62A).